A 122-amino-acid polypeptide reads, in one-letter code: Large ribosomal subunit protein uL14 (122 aa).

The protein belongs to the universal ribosomal protein uL14 family. As to quaternary structure, part of the 50S ribosomal subunit. Forms a cluster with proteins L3 and L19. In the 70S ribosome, L14 and L19 interact and together make contacts with the 16S rRNA in bridges B5 and B8.

In terms of biological role, binds to 23S rRNA. Forms part of two intersubunit bridges in the 70S ribosome. In Alteromonas mediterranea (strain DSM 17117 / CIP 110805 / LMG 28347 / Deep ecotype), this protein is Large ribosomal subunit protein uL14.